Here is a 267-residue protein sequence, read N- to C-terminus: Thiamine pyrophosphokinase 2 (267 aa).

Belongs to the thiamine pyrophosphokinase family. As to expression, expressed in leaves and at lower levels in flowers.

It is found in the cytoplasm. Its subcellular location is the cytosol. It catalyses the reaction thiamine + ATP = thiamine diphosphate + AMP + H(+). The protein operates within cofactor biosynthesis; thiamine diphosphate biosynthesis; thiamine diphosphate from thiamine: step 1/1. Its function is as follows. Catalyzes the phosphorylation of thiamine to thiamine pyrophosphate (TPP). TPP is an active cofactor for enzymes involved in glycolysis and energy production. Plant leaves require high levels of TPP for photosynthesis and carbohydrate metabolism. The chain is Thiamine pyrophosphokinase 2 from Arabidopsis thaliana (Mouse-ear cress).